The sequence spans 732 residues: Inducible ornithine decarboxylase (732 aa).

N6-(pyridoxal phosphate)lysine is present on Lys-355.

This sequence belongs to the Orn/Lys/Arg decarboxylase class-I family. Requires pyridoxal 5'-phosphate as cofactor.

It catalyses the reaction L-ornithine + H(+) = putrescine + CO2. It participates in amine and polyamine biosynthesis; putrescine biosynthesis via L-ornithine pathway; putrescine from L-ornithine: step 1/1. Its function is as follows. The first enzyme leading to putrescine and thus polyamine synthesis. The polypeptide is Inducible ornithine decarboxylase (Escherichia coli (strain K12)).